The following is a 728-amino-acid chain: MVKPKYKGRSTINRSAASTNPDRVQGAGGQNMRDRGTIRRLNMYRQKERRNSRGKVIKPLQYQSTVASGTVARVEPNIKWFGNTRVIKQASLQKFQEEMDKVMKDPYKVVMKQSKLPMSLLHDRIQPHNAKVHILDTESFESTFGPKSQRKRPNLFASDMQSLLENAEMSTESYDQGKDRDLVMEDTGVRNEAQEEIYKKGQSKRIWGELYKVIDSSDVVVQVLDARDPMGTRSPHIEAYLKKEKPWKHLIFVLNKCDLVPTWATKRWVAVLSQDYPTLAFHASLTNPFGKGAFIQLLRQFGKLHTDKKQISVGFIGYPNVGKSSVINTLRSKKVCNVAPIAGETKVWQYITLMRRIFLIDCPGVVYPSEDSETDIVLKGVVQVEKIKAPQDHIGAVLERAKPEYISKTYKIESWENAEDFLEKLALRTGKLLKGGEPDMLTVSKMVLNDWQRGRIPFFVKPPNAELPTDSQLPPSSPLEVPTETTQNNPEEETTETEVERSDSITEKEPEGDCSQDRNSEMQQILARVRQNFGKINVGPQFSADDLVPVEMSDLEDLESSGEEEEQEQEQPGEDAEEERSPDTQEEPVGNDTKAVLRALDEKIAKYQRFLNKAKAKKFSAVRISKDLSEKVFAKYKEEKKTSAEDSDAAPTKKARKWDAQMEEEPSNKTQRMLTCKERRRAARQQQSKKVGVRYYETHNVKNRNRNKKKTSDSEGQKHRRNKFRQKQ.

An N-acetylmethionine modification is found at M1. Positions 1-33 (MVKPKYKGRSTINRSAASTNPDRVQGAGGQNMR) are disordered. Positions 10–22 (STINRSAASTNPD) are enriched in polar residues. In terms of domain architecture, CP-type G spans 207–368 (WGELYKVIDS…LIDCPGVVYP (162 aa)). Residues 317–324 (GYPNVGKS) and 361–365 (DCPGV) each bind GTP. Disordered stretches follow at residues 462 to 521 (PPNA…RNSE), 538 to 595 (VGPQ…DTKA), and 636 to 728 (YKEE…RQKQ). Low complexity predominate over residues 480–489 (EVPTETTQNN). Basic and acidic residues predominate over residues 498–520 (EVERSDSITEKEPEGDCSQDRNS). S504 carries the post-translational modification Phosphoserine. Over residues 553–586 (SDLEDLESSGEEEEQEQEQPGEDAEEERSPDTQE) the composition is skewed to acidic residues. A compositionally biased stretch (basic residues) spans 718–728 (KHRRNKFRQKQ).

This sequence belongs to the TRAFAC class YlqF/YawG GTPase family. NOG2 subfamily. In terms of assembly, interacts with LYAR and RPL23A. Interacts with the nuclear importin-beta receptor and, at a lower extent, with importin-alpha.

It is found in the nucleus. It localises to the nucleolus. In terms of biological role, GTPase that associates with pre-60S ribosomal subunits in the nucleolus and is required for their nuclear export and maturation. May promote cell proliferation possibly by increasing p53/TP53 protein levels, and consequently those of its downstream product CDKN1A/p21, and decreasing RPL23A protein levels. This Mus musculus (Mouse) protein is Nucleolar GTP-binding protein 2 (Gnl2).